A 343-amino-acid chain; its full sequence is L-threonine 3-dehydrogenase (343 aa).

Residue cysteine 40 participates in Zn(2+) binding. Active-site charge relay system residues include threonine 42 and histidine 45. The Zn(2+) site is built by histidine 65, glutamate 66, cysteine 95, cysteine 98, cysteine 101, and cysteine 109. Residues isoleucine 177, aspartate 197, arginine 202, leucine 264 to isoleucine 266, and isoleucine 288 to tyrosine 289 contribute to the NAD(+) site.

Belongs to the zinc-containing alcohol dehydrogenase family. As to quaternary structure, homotetramer. The cofactor is Zn(2+).

Its subcellular location is the cytoplasm. The catalysed reaction is L-threonine + NAD(+) = (2S)-2-amino-3-oxobutanoate + NADH + H(+). The protein operates within amino-acid degradation; L-threonine degradation via oxydo-reductase pathway; glycine from L-threonine: step 1/2. In terms of biological role, catalyzes the NAD(+)-dependent oxidation of L-threonine to 2-amino-3-ketobutyrate. This Photobacterium profundum (strain SS9) protein is L-threonine 3-dehydrogenase.